Reading from the N-terminus, the 161-residue chain is NADH:FMN oxidoreductase (161 aa).

Residues D30, A37 to T40, C54 to T61, A88, R94, and F151 each bind FMN.

This sequence belongs to the non-flavoprotein flavin reductase family.

Its subcellular location is the cytoplasm. The enzyme catalyses FMNH2 + NAD(+) = FMN + NADH + 2 H(+). The catalysed reaction is FADH2 + NAD(+) = FAD + NADH + 2 H(+). Its pathway is sulfur metabolism; dibenzothiophene degradation. An NADH:FMN oxidoreductase which supplies reduced FMN for the '4S' desulfurization pathway that removes covalently bound sulfur from dibenzothiophene (DBT) without breaking carbon-carbon bonds. Can also use FAD. Provides DszC and probably also DszA (DBT-monooxygenase and DBTO2-monooxygenase respectively) with reduced flavin (FMN and/or FAD). This Mycolicibacterium goodii (Mycobacterium goodii) protein is NADH:FMN oxidoreductase.